Consider the following 415-residue polypeptide: Isocitrate dehydrogenase [NADP] 1 (415 aa).

NADP(+) is bound at residue Thr-104. Residues Ser-113, Asn-115, Arg-119, Arg-129, and Arg-153 each coordinate D-threo-isocitrate. Asp-307 is a binding site for Mg(2+). NADP(+) is bound by residues 339 to 345, Asn-352, Tyr-390, and Arg-394; that span reads HGTAPKY.

The protein belongs to the isocitrate and isopropylmalate dehydrogenases family. As to quaternary structure, homodimer. The cofactor is Mg(2+). Requires Mn(2+) as cofactor.

The catalysed reaction is D-threo-isocitrate + NADP(+) = 2-oxoglutarate + CO2 + NADPH. Its function is as follows. Catalyzes the oxidative decarboxylation of isocitrate to 2-oxoglutarate and carbon dioxide with the concomitant reduction of NADP(+). The chain is Isocitrate dehydrogenase [NADP] 1 from Colwellia maris.